We begin with the raw amino-acid sequence, 192 residues long: Thymidine kinase (192 aa).

Residues 9–16 (GAMNSGKT) and 85–88 (DEAQ) contribute to the ATP site. E86 functions as the Proton acceptor in the catalytic mechanism. Residues C143, C146, C180, and H183 each coordinate Zn(2+).

Belongs to the thymidine kinase family. Homotetramer.

The protein resides in the cytoplasm. It carries out the reaction thymidine + ATP = dTMP + ADP + H(+). In Lactiplantibacillus plantarum (strain ATCC BAA-793 / NCIMB 8826 / WCFS1) (Lactobacillus plantarum), this protein is Thymidine kinase.